The primary structure comprises 58 residues: UPF0337 protein SAV_738 (58 aa).

Residues Met-1–Lys-58 are disordered. The span at Leu-31–Lys-58 shows a compositional bias: basic and acidic residues.

This sequence belongs to the UPF0337 (CsbD) family.

The polypeptide is UPF0337 protein SAV_738 (Streptomyces avermitilis (strain ATCC 31267 / DSM 46492 / JCM 5070 / NBRC 14893 / NCIMB 12804 / NRRL 8165 / MA-4680)).